The following is a 249-amino-acid chain: ATP-dependent Clp protease proteolytic subunit (249 aa).

Residue S107 is the Nucleophile of the active site. H132 is an active-site residue. Residues 212-249 form a disordered region; the sequence is ESASQDNSLDPDAPDESASQDNSLDPDAPDETRPPKLR.

It belongs to the peptidase S14 family. Component of the chloroplastic Clp protease core complex.

It is found in the plastid. The protein localises to the chloroplast stroma. It carries out the reaction Hydrolysis of proteins to small peptides in the presence of ATP and magnesium. alpha-casein is the usual test substrate. In the absence of ATP, only oligopeptides shorter than five residues are hydrolyzed (such as succinyl-Leu-Tyr-|-NHMec, and Leu-Tyr-Leu-|-Tyr-Trp, in which cleavage of the -Tyr-|-Leu- and -Tyr-|-Trp bonds also occurs).. Functionally, cleaves peptides in various proteins in a process that requires ATP hydrolysis. Has a chymotrypsin-like activity. Plays a major role in the degradation of misfolded proteins. The chain is ATP-dependent Clp protease proteolytic subunit from Oenothera elata subsp. hookeri (Hooker's evening primrose).